We begin with the raw amino-acid sequence, 212 residues long: Eggshell protein 1 (212 aa).

A signal peptide spans 1–27 (MKSSLTLLFLAAIGYTIAYPPPSDYDS). Positions 155-212 (RKNGHGKGGKGGNGGGGGKGGGKGGGNGKGNGKGGGGKNGGGKGGNGGKGGSYAPSYY) are disordered. The span at 163 to 205 (GKGGNGGGGGKGGGKGGGNGKGNGKGGGGKNGGGKGGNGGKGG) shows a compositional bias: gly residues.

In terms of tissue distribution, detected only in mature female parasites.

The polypeptide is Eggshell protein 1 (ESG-1) (Schistosoma japonicum (Blood fluke)).